The primary structure comprises 131 residues: Translation initiation factor 5A (131 aa).

Residue lysine 36 is modified to Hypusine.

This sequence belongs to the eIF-5A family.

Its subcellular location is the cytoplasm. Functions by promoting the formation of the first peptide bond. This Saccharolobus islandicus (strain Y.N.15.51 / Yellowstone #2) (Sulfolobus islandicus) protein is Translation initiation factor 5A (eIF5A).